Consider the following 354-residue polypeptide: Alanine racemase (354 aa).

The Proton acceptor; specific for D-alanine role is filled by Lys33. Lys33 carries the N6-(pyridoxal phosphate)lysine modification. Position 127 (Arg127) interacts with substrate. The active-site Proton acceptor; specific for L-alanine is the Tyr251. Residue Met299 participates in substrate binding.

It belongs to the alanine racemase family. It depends on pyridoxal 5'-phosphate as a cofactor.

The enzyme catalyses L-alanine = D-alanine. It functions in the pathway amino-acid biosynthesis; D-alanine biosynthesis; D-alanine from L-alanine: step 1/1. Its function is as follows. Catalyzes the interconversion of L-alanine and D-alanine. May also act on other amino acids. This chain is Alanine racemase (alr), found in Fusobacterium nucleatum subsp. nucleatum (strain ATCC 25586 / DSM 15643 / BCRC 10681 / CIP 101130 / JCM 8532 / KCTC 2640 / LMG 13131 / VPI 4355).